An 88-amino-acid polypeptide reads, in one-letter code: Cytochrome c oxidase subunit 6B2 (88 aa).

The region spanning 29–75 (TRNCYQNFLDYHRCIKTMNRRGKSTQPCEYYFRVYHSLCPISWVQRW) is the CHCH domain. Positions 32-42 (CYQNFLDYHRC) match the Cx9C motif motif. 2 cysteine pairs are disulfide-bonded: Cys32–Cys67 and Cys42–Cys56. The Cx10C motif motif lies at 56-67 (CEYYFRVYHSLC).

This sequence belongs to the cytochrome c oxidase subunit 6B family. In terms of assembly, component of the cytochrome c oxidase (complex IV, CIV), a multisubunit enzyme composed of 14 subunits. The complex is composed of a catalytic core of 3 subunits MT-CO1, MT-CO2 and MT-CO3, encoded in the mitochondrial DNA, and 11 supernumerary subunits COX4I1 (or COX4I2), COX5A, COX5B, COX6A2 (or COX6A1), COX6B1 (or COX6B2), COX6C, COX7A1 (or COX7A2), COX7B, COX7C, COX8B and NDUFA4, which are encoded in the nuclear genome. The complex exists as a monomer or a dimer and forms supercomplexes (SCs) in the inner mitochondrial membrane with NADH-ubiquinone oxidoreductase (complex I, CI) and ubiquinol-cytochrome c oxidoreductase (cytochrome b-c1 complex, complex III, CIII), resulting in different assemblies (supercomplex SCI(1)III(2)IV(1) and megacomplex MCI(2)III(2)IV(2)). In terms of tissue distribution, testis specific.

The protein localises to the mitochondrion inner membrane. Its pathway is energy metabolism; oxidative phosphorylation. Functionally, component of the cytochrome c oxidase, the last enzyme in the mitochondrial electron transport chain which drives oxidative phosphorylation. The respiratory chain contains 3 multisubunit complexes succinate dehydrogenase (complex II, CII), ubiquinol-cytochrome c oxidoreductase (cytochrome b-c1 complex, complex III, CIII) and cytochrome c oxidase (complex IV, CIV), that cooperate to transfer electrons derived from NADH and succinate to molecular oxygen, creating an electrochemical gradient over the inner membrane that drives transmembrane transport and the ATP synthase. Cytochrome c oxidase is the component of the respiratory chain that catalyzes the reduction of oxygen to water. Electrons originating from reduced cytochrome c in the intermembrane space (IMS) are transferred via the dinuclear copper A center (CU(A)) of subunit 2 and heme A of subunit 1 to the active site in subunit 1, a binuclear center (BNC) formed by heme A3 and copper B (CU(B)). The BNC reduces molecular oxygen to 2 water molecules using 4 electrons from cytochrome c in the IMS and 4 protons from the mitochondrial matrix. This chain is Cytochrome c oxidase subunit 6B2 (COX6B2), found in Bos taurus (Bovine).